Reading from the N-terminus, the 161-residue chain is 3-hydroxyacyl-[acyl-carrier-protein] dehydratase FabZ (161 aa).

H64 is a catalytic residue.

The protein belongs to the thioester dehydratase family. FabZ subfamily.

It localises to the cytoplasm. The catalysed reaction is a (3R)-hydroxyacyl-[ACP] = a (2E)-enoyl-[ACP] + H2O. Functionally, involved in unsaturated fatty acids biosynthesis. Catalyzes the dehydration of short chain beta-hydroxyacyl-ACPs and long chain saturated and unsaturated beta-hydroxyacyl-ACPs. The protein is 3-hydroxyacyl-[acyl-carrier-protein] dehydratase FabZ of Paramagnetospirillum magneticum (strain ATCC 700264 / AMB-1) (Magnetospirillum magneticum).